Here is a 237-residue protein sequence, read N- to C-terminus: Phosphoribosylaminoimidazole-succinocarboxamide synthase (237 aa).

Belongs to the SAICAR synthetase family.

It carries out the reaction 5-amino-1-(5-phospho-D-ribosyl)imidazole-4-carboxylate + L-aspartate + ATP = (2S)-2-[5-amino-1-(5-phospho-beta-D-ribosyl)imidazole-4-carboxamido]succinate + ADP + phosphate + 2 H(+). The protein operates within purine metabolism; IMP biosynthesis via de novo pathway; 5-amino-1-(5-phospho-D-ribosyl)imidazole-4-carboxamide from 5-amino-1-(5-phospho-D-ribosyl)imidazole-4-carboxylate: step 1/2. The chain is Phosphoribosylaminoimidazole-succinocarboxamide synthase from Salmonella arizonae (strain ATCC BAA-731 / CDC346-86 / RSK2980).